The chain runs to 241 residues: Phosphoribosylaminoimidazole-succinocarboxamide synthase (241 aa).

This sequence belongs to the SAICAR synthetase family.

The enzyme catalyses 5-amino-1-(5-phospho-D-ribosyl)imidazole-4-carboxylate + L-aspartate + ATP = (2S)-2-[5-amino-1-(5-phospho-beta-D-ribosyl)imidazole-4-carboxamido]succinate + ADP + phosphate + 2 H(+). It participates in purine metabolism; IMP biosynthesis via de novo pathway; 5-amino-1-(5-phospho-D-ribosyl)imidazole-4-carboxamide from 5-amino-1-(5-phospho-D-ribosyl)imidazole-4-carboxylate: step 1/2. This Methanoculleus marisnigri (strain ATCC 35101 / DSM 1498 / JR1) protein is Phosphoribosylaminoimidazole-succinocarboxamide synthase.